Consider the following 306-residue polypeptide: Pantothenate kinase (306 aa).

91–98 (GSVAVGKS) is a binding site for ATP.

Belongs to the prokaryotic pantothenate kinase family.

It is found in the cytoplasm. The enzyme catalyses (R)-pantothenate + ATP = (R)-4'-phosphopantothenate + ADP + H(+). It functions in the pathway cofactor biosynthesis; coenzyme A biosynthesis; CoA from (R)-pantothenate: step 1/5. The chain is Pantothenate kinase from Streptococcus equi subsp. zooepidemicus (strain MGCS10565).